Reading from the N-terminus, the 113-residue chain is Class I hydrophobin 1 (113 aa).

The signal sequence occupies residues 1–17; the sequence is MQFKFLSTVALATLAVA. 4 disulfide bridges follow: Cys32/Cys92, Cys39/Cys86, Cys40/Cys73, and Cys93/Cys106.

The protein belongs to the fungal hydrophobin family. In terms of assembly, self-assembles to form functional amyloid fibrils called rodlets. Self-assembly into fibrillar rodlets occurs spontaneously at hydrophobic:hydrophilic interfaces and the rodlets further associate laterally to form amphipathic monolayers.

It is found in the secreted. The protein localises to the cell wall. Aerial growth, conidiation, and dispersal of filamentous fungi in the environment rely upon a capability of their secreting small amphipathic proteins called hydrophobins (HPBs) with low sequence identity. Class I can self-assemble into an outermost layer of rodlet bundles on aerial cell surfaces, conferring cellular hydrophobicity that supports fungal growth, development and dispersal; whereas Class II form highly ordered films at water-air interfaces through intermolecular interactions but contribute nothing to the rodlet structure. CoH1 is an asexual monokaryon-specific class I hydrophobin that is involved in aerial growth of mycelia. This chain is Class I hydrophobin 1, found in Coprinopsis cinerea (Inky cap fungus).